The sequence spans 398 residues: Phosphoglycerate kinase (398 aa).

Residues 21–23 (DFN), R36, 59–62 (HFGR), R117, and R150 each bind substrate. Residues K200, E321, and 351-354 (GGDS) each bind ATP.

This sequence belongs to the phosphoglycerate kinase family. Monomer.

The protein resides in the cytoplasm. The catalysed reaction is (2R)-3-phosphoglycerate + ATP = (2R)-3-phospho-glyceroyl phosphate + ADP. It participates in carbohydrate degradation; glycolysis; pyruvate from D-glyceraldehyde 3-phosphate: step 2/5. The sequence is that of Phosphoglycerate kinase from Wolbachia sp. subsp. Drosophila simulans (strain wRi).